Here is a 356-residue protein sequence, read N- to C-terminus: Chorismate synthase (356 aa).

2 residues coordinate NADP(+): R44 and R49. FMN-binding positions include 121 to 123, G278, 293 to 297, and R320; these read HFS and KPTPS.

Belongs to the chorismate synthase family. It depends on FMNH2 as a cofactor.

It catalyses the reaction 5-O-(1-carboxyvinyl)-3-phosphoshikimate = chorismate + phosphate. It functions in the pathway metabolic intermediate biosynthesis; chorismate biosynthesis; chorismate from D-erythrose 4-phosphate and phosphoenolpyruvate: step 7/7. Its function is as follows. Catalyzes the anti-1,4-elimination of the C-3 phosphate and the C-6 proR hydrogen from 5-enolpyruvylshikimate-3-phosphate (EPSP) to yield chorismate, which is the branch point compound that serves as the starting substrate for the three terminal pathways of aromatic amino acid biosynthesis. This reaction introduces a second double bond into the aromatic ring system. The protein is Chorismate synthase of Thermococcus gammatolerans (strain DSM 15229 / JCM 11827 / EJ3).